Reading from the N-terminus, the 374-residue chain is uncharacterized protein (374 aa).

An N-terminal signal peptide occupies residues 1–23; sequence MDSKWFFIVLISFLLVLPSIVTP. The segment at 66 to 374 is disordered; it reads SSSSSSSSSS…SSSSSSSGEN (309 aa).

The protein resides in the secreted. This is an uncharacterized protein from Dictyostelium discoideum (Social amoeba).